The primary structure comprises 192 residues: MGKPALILASQSPRRRDILSLTLIPFETMAIETRETLDPTSSIEENVTKIALEKAECAAALLPKQNGKTIILTADTVVAKGNRIYGKPAGFDEAFEMLKSLQNRSHRVYTGFVLLCCDKIHTECVTTTVELEPMSDNEIKRYILSEKPYDKAGSYGIQDPLMACYIRRIEGCYHNVVGLPLSRVCKALKTFL.

D75 acts as the Proton acceptor in catalysis.

It belongs to the Maf family. YhdE subfamily. Requires a divalent metal cation as cofactor.

The protein resides in the cytoplasm. The enzyme catalyses dTTP + H2O = dTMP + diphosphate + H(+). It catalyses the reaction UTP + H2O = UMP + diphosphate + H(+). Nucleoside triphosphate pyrophosphatase that hydrolyzes dTTP and UTP. May have a dual role in cell division arrest and in preventing the incorporation of modified nucleotides into cellular nucleic acids. The chain is dTTP/UTP pyrophosphatase from Pelodictyon phaeoclathratiforme (strain DSM 5477 / BU-1).